Consider the following 41-residue polypeptide: Pi-stichotoxin-Hcr5c (41 aa).

Cystine bridges form between C4–C37, C6–C30, and C20–C38.

This sequence belongs to the sea anemone type 3 (BDS) potassium channel toxin family.

The protein localises to the secreted. Its subcellular location is the nematocyst. Weakly and reversibly inhibits rat homomeric ASIC1 (isoform ASIC1a) (IC(50)=4.95 uM), and ASIC3 (IC(50)=17 uM). ASIC1a current inhibition and ASIC3 transient current inhibition are not complete, and reach a maximum of 70% inhibition and 80%, respectively. In Radianthus crispa (Leathery sea anemone), this protein is Pi-stichotoxin-Hcr5c.